The chain runs to 257 residues: MFQIDLNCDLGESFGAYKIGLDQDILEYVTSANIACGFHAGDPSVMRKTVALAAERGVKMGAHPGLPDLLGFGRRNMAISPEEAYDLVVYQIGALSGFLKAEGLHMQHVKPHGALYNMAAVDQKLSDAIAKAVYKVDPGLILFGLAESELVKAGERIGLQTANEVFADRTYQSDGTLTPRSQPDALIESDDAAVTQVIKMVKEGAVKSQQGHDVSLKADTVCIHGDGAHALTFAQKIRKQLKAAGIEVTAISEQRST.

It belongs to the LamB/PxpA family. Forms a complex composed of PxpA, PxpB and PxpC.

The catalysed reaction is 5-oxo-L-proline + ATP + 2 H2O = L-glutamate + ADP + phosphate + H(+). Functionally, catalyzes the cleavage of 5-oxoproline to form L-glutamate coupled to the hydrolysis of ATP to ADP and inorganic phosphate. The polypeptide is 5-oxoprolinase subunit A (Bacillus subtilis (strain 168)).